The chain runs to 466 residues: Glutamate--tRNA ligase (466 aa).

A 'HIGH' region motif is present at residues 10–20; that stretch reads PSPTGYLHIGG. The short motif at 237–241 is the 'KMSKS' region element; that stretch reads RLSKR. Residue lysine 240 coordinates ATP.

This sequence belongs to the class-I aminoacyl-tRNA synthetase family. Glutamate--tRNA ligase type 1 subfamily. Monomer.

The protein localises to the cytoplasm. The catalysed reaction is tRNA(Glu) + L-glutamate + ATP = L-glutamyl-tRNA(Glu) + AMP + diphosphate. Functionally, catalyzes the attachment of glutamate to tRNA(Glu) in a two-step reaction: glutamate is first activated by ATP to form Glu-AMP and then transferred to the acceptor end of tRNA(Glu). This is Glutamate--tRNA ligase from Syntrophotalea carbinolica (strain DSM 2380 / NBRC 103641 / GraBd1) (Pelobacter carbinolicus).